Reading from the N-terminus, the 394-residue chain is Chorismate synthase (394 aa).

NADP(+) is bound at residue Arg48. Residues 52 to 90 form a disordered region; the sequence is QSMITTSRGEPDEVSIQSGLQDGYTTGTPIGMTIENKDA. Polar residues predominate over residues 66–79; sequence SIQSGLQDGYTTGT. FMN is bound by residues 125-127, Gly297, 312-316, and Arg339; these read RSS and HAPTS.

Belongs to the chorismate synthase family. It depends on FMNH2 as a cofactor.

The enzyme catalyses 5-O-(1-carboxyvinyl)-3-phosphoshikimate = chorismate + phosphate. Its pathway is metabolic intermediate biosynthesis; chorismate biosynthesis; chorismate from D-erythrose 4-phosphate and phosphoenolpyruvate: step 7/7. Catalyzes the anti-1,4-elimination of the C-3 phosphate and the C-6 proR hydrogen from 5-enolpyruvylshikimate-3-phosphate (EPSP) to yield chorismate, which is the branch point compound that serves as the starting substrate for the three terminal pathways of aromatic amino acid biosynthesis. This reaction introduces a second double bond into the aromatic ring system. This Halobacterium salinarum (strain ATCC 700922 / JCM 11081 / NRC-1) (Halobacterium halobium) protein is Chorismate synthase.